A 316-amino-acid chain; its full sequence is ATP synthase gamma chain (316 aa).

It belongs to the ATPase gamma chain family. In terms of assembly, F-type ATPases have 2 components, CF(1) - the catalytic core - and CF(0) - the membrane proton channel. CF(1) has five subunits: alpha(3), beta(3), gamma(1), delta(1), epsilon(1). CF(0) has three main subunits: a, b and c.

The protein localises to the cellular thylakoid membrane. Functionally, produces ATP from ADP in the presence of a proton gradient across the membrane. The gamma chain is believed to be important in regulating ATPase activity and the flow of protons through the CF(0) complex. This Prochlorococcus marinus (strain MIT 9515) protein is ATP synthase gamma chain.